The primary structure comprises 345 residues: Phosphoribosylformylglycinamidine cyclo-ligase (345 aa).

This sequence belongs to the AIR synthase family.

It localises to the cytoplasm. It catalyses the reaction 2-formamido-N(1)-(5-O-phospho-beta-D-ribosyl)acetamidine + ATP = 5-amino-1-(5-phospho-beta-D-ribosyl)imidazole + ADP + phosphate + H(+). It participates in purine metabolism; IMP biosynthesis via de novo pathway; 5-amino-1-(5-phospho-D-ribosyl)imidazole from N(2)-formyl-N(1)-(5-phospho-D-ribosyl)glycinamide: step 2/2. The sequence is that of Phosphoribosylformylglycinamidine cyclo-ligase from Limosilactobacillus reuteri (strain DSM 20016) (Lactobacillus reuteri).